Consider the following 225-residue polypeptide: UPF0758 protein Shewmr7_0359 (225 aa).

In terms of domain architecture, MPN spans 102-224 (VLTNPDLTRD…IVSFAERGWI (123 aa)). Zn(2+) contacts are provided by H173, H175, and D186. Positions 173–186 (HNHPSGIAEPSQAD) match the JAMM motif motif.

This sequence belongs to the UPF0758 family.

This Shewanella sp. (strain MR-7) protein is UPF0758 protein Shewmr7_0359.